A 116-amino-acid chain; its full sequence is Cysteine proteinase inhibitor 1 (116 aa).

The N-terminal stretch at 1 to 26 (MVPKPLSLLLFLLLALSAAVVGGRKL) is a signal peptide. In terms of domain architecture, Cystatin spans 30-89 (GGWRPIESLNSAEVQDVAQFAVSEHNKQANDELQYQSVVRGYTQVVAGTNYRLVIAAKDG). Positions 73-77 (QVVAG) match the Secondary area of contact motif. Asparagine 109 is a glycosylation site (N-linked (GlcNAc...) asparagine).

The protein belongs to the cystatin family. Phytocystatin subfamily. Post-translationally, glycosylated.

The protein resides in the secreted. Its function is as follows. Specific inhibitor of papain family cysteine proteinases. Inhibits papain, chymopapain, bromelain, ficin, human cathepsins B, H and L, actinidain and house dustmite endopeptidase 1, but does not inhibit human bleomycin hydrolase. Inhibits papain with an IC(50) of 2.47 nM. Does not inhibit cysteine proteinases belonging to other families including clostripain, streptopain and calpain. The sequence is that of Cysteine proteinase inhibitor 1 from Actinidia deliciosa (Kiwi).